A 186-amino-acid chain; its full sequence is MKGGSIEAGEVSKDASPRKGVARGLSIMDFILRIIAAVATLGSALAMGTTNETLPFATQFIKFRAEFDDLPSLVFFVMANAVVCGYLVLSLMISVFHILRSTPVKSRILLVALDTVMLSLVTASASAATSIVYIAHNGNTGANWFAICQQYNNFCERISGSLIGSYIAVALFIILIMLSLVAISRN.

Residues 1–26 (MKGGSIEAGEVSKDASPRKGVARGLS) lie on the Cytoplasmic side of the membrane. A helical transmembrane segment spans residues 27 to 47 (IMDFILRIIAAVATLGSALAM). Residues 48–72 (GTTNETLPFATQFIKFRAEFDDLPS) are Extracellular-facing. Asparagine 51 carries N-linked (GlcNAc...) asparagine glycosylation. Residues 73–93 (LVFFVMANAVVCGYLVLSLMI) form a helical membrane-spanning segment. Topologically, residues 94–107 (SVFHILRSTPVKSR) are cytoplasmic. A helical transmembrane segment spans residues 108-128 (ILLVALDTVMLSLVTASASAA). The Extracellular segment spans residues 129–162 (TSIVYIAHNGNTGANWFAICQQYNNFCERISGSL). Residues 163 to 183 (IGSYIAVALFIILIMLSLVAI) form a helical membrane-spanning segment. Residues 184 to 186 (SRN) lie on the Cytoplasmic side of the membrane.

Belongs to the Casparian strip membrane proteins (CASP) family. In terms of assembly, homodimer and heterodimers.

The protein localises to the cell membrane. Regulates membrane-cell wall junctions and localized cell wall deposition. Required for establishment of the Casparian strip membrane domain (CSD) and the subsequent formation of Casparian strips, a cell wall modification of the root endodermis that determines an apoplastic barrier between the intraorganismal apoplasm and the extraorganismal apoplasm and prevents lateral diffusion. This chain is CASP-like protein 7, found in Glycine max (Soybean).